The chain runs to 330 residues: Putative protein DDB_G0285185 (330 aa).

The interval 212–240 is disordered; it reads NKLQNQVQSSPKLSSPITKNKEQIVSTTS. Residues 214–240 show a composition bias toward polar residues; sequence LQNQVQSSPKLSSPITKNKEQIVSTTS.

This chain is Putative protein DDB_G0285185, found in Dictyostelium discoideum (Social amoeba).